The sequence spans 1221 residues: DNA topoisomerase 2 (1221 aa).

ATP is bound by residues N65, N94, 122-124, 135-142, and 352-354; these read SSN, GRHGYGAK, and QNK. The region spanning 432-546 is the Toprim domain; sequence RTLIVTEGDS…SLLVRNPGFI (115 aa). Positions 438, 515, and 517 each coordinate Mg(2+). The 417-residue stretch at 681–1097 folds into the Topo IIA-type catalytic domain; the sequence is LAHSVDGLKP…TPVQLWLGEL (417 aa). The active-site O-(5'-phospho-DNA)-tyrosine intermediate is Y771. Residues 952–961 form an interaction with DNA region; it reads GLTQRIHING. Residues 1158–1198 are disordered; sequence VPPPTKRGAGGRSDGDGGATAAGAAAAVGGRGEKKGPGRAG. Positions 1165 to 1177 are enriched in gly residues; the sequence is GAGGRSDGDGGAT.

This sequence belongs to the type II topoisomerase family. In terms of assembly, homodimer. It depends on Mg(2+) as a cofactor. Mn(2+) serves as cofactor. The cofactor is Ca(2+).

The protein localises to the nucleus. It carries out the reaction ATP-dependent breakage, passage and rejoining of double-stranded DNA.. In terms of biological role, control of topological states of DNA by transient breakage and subsequent rejoining of DNA strands. Topoisomerase II makes double-strand breaks. The chain is DNA topoisomerase 2 (TOP2) from Trypanosoma brucei brucei.